The primary structure comprises 460 residues: Serine--tRNA ligase (460 aa).

Positions alanine 43 to glycine 66 are enriched in basic and acidic residues. Residues alanine 43–leucine 81 form a disordered region. Threonine 242–glutamate 244 serves as a coordination point for L-serine. Residues arginine 273 to glutamate 275 and valine 289 each bind ATP. Position 296 (glutamate 296) interacts with L-serine. An ATP-binding site is contributed by glutamate 369 to serine 372. Position 405 (serine 405) interacts with L-serine.

It belongs to the class-II aminoacyl-tRNA synthetase family. Type-1 seryl-tRNA synthetase subfamily. As to quaternary structure, homodimer. The tRNA molecule binds across the dimer.

Its subcellular location is the cytoplasm. The enzyme catalyses tRNA(Ser) + L-serine + ATP = L-seryl-tRNA(Ser) + AMP + diphosphate + H(+). The catalysed reaction is tRNA(Sec) + L-serine + ATP = L-seryl-tRNA(Sec) + AMP + diphosphate + H(+). Its pathway is aminoacyl-tRNA biosynthesis; selenocysteinyl-tRNA(Sec) biosynthesis; L-seryl-tRNA(Sec) from L-serine and tRNA(Sec): step 1/1. In terms of biological role, catalyzes the attachment of serine to tRNA(Ser). Is also probably able to aminoacylate tRNA(Sec) with serine, to form the misacylated tRNA L-seryl-tRNA(Sec), which will be further converted into selenocysteinyl-tRNA(Sec). This is Serine--tRNA ligase (serS) from Haloarcula marismortui (strain ATCC 43049 / DSM 3752 / JCM 8966 / VKM B-1809) (Halobacterium marismortui).